Consider the following 147-residue polypeptide: Methylated-DNA--protein-cysteine methyltransferase (147 aa).

Catalysis depends on cysteine 112, which acts as the Nucleophile; methyl group acceptor.

Belongs to the MGMT family.

It localises to the cytoplasm. The enzyme catalyses a 6-O-methyl-2'-deoxyguanosine in DNA + L-cysteinyl-[protein] = S-methyl-L-cysteinyl-[protein] + a 2'-deoxyguanosine in DNA. It catalyses the reaction a 4-O-methyl-thymidine in DNA + L-cysteinyl-[protein] = a thymidine in DNA + S-methyl-L-cysteinyl-[protein]. Functionally, involved in the cellular defense against the biological effects of O6-methylguanine (O6-MeG) and O4-methylthymine (O4-MeT) in DNA. Repairs the methylated nucleobase in DNA by stoichiometrically transferring the methyl group to a cysteine residue in the enzyme. This is a suicide reaction: the enzyme is irreversibly inactivated. This Archaeoglobus fulgidus (strain ATCC 49558 / DSM 4304 / JCM 9628 / NBRC 100126 / VC-16) protein is Methylated-DNA--protein-cysteine methyltransferase.